Reading from the N-terminus, the 161-residue chain is Non-secretory ribonuclease (161 aa).

The first 27 residues, 1 to 27 (MVPKLFTSQICLLLLLGLMGVEGSLHA), serve as a signal peptide directing secretion. Residue tryptophan 34 is glycosylated (C-linked (Man) tryptophan). The active-site Proton acceptor is the histidine 42. Asparagine 44 is a glycosylation site (N-linked (GlcNAc...) asparagine). Disulfide bonds link cysteine 50–cysteine 110, cysteine 64–cysteine 123, cysteine 82–cysteine 138, and cysteine 89–cysteine 98. At tyrosine 60 the chain carries 3'-nitrotyrosine. Substrate is bound at residue 65–69 (KNQNT). Asparagine 86, asparagine 92, asparagine 111, and asparagine 119 each carry an N-linked (GlcNAc...) asparagine glycan. Histidine 156 serves as the catalytic Proton donor.

The protein belongs to the pancreatic ribonuclease family. As to quaternary structure, interacts with and forms a tight 1:1 complex with RNH1. Dimerization of two such complexes may occur.

The protein localises to the lysosome. It is found in the cytoplasmic granule. The catalysed reaction is an [RNA] containing cytidine + H2O = an [RNA]-3'-cytidine-3'-phosphate + a 5'-hydroxy-ribonucleotide-3'-[RNA].. The enzyme catalyses an [RNA] containing uridine + H2O = an [RNA]-3'-uridine-3'-phosphate + a 5'-hydroxy-ribonucleotide-3'-[RNA].. Functionally, this is a non-secretory ribonuclease. It is a pyrimidine specific nuclease with a slight preference for U. Cytotoxin and helminthotoxin. Possesses a wide variety of biological activities. In Nomascus leucogenys (Northern white-cheeked gibbon), this protein is Non-secretory ribonuclease (RNASE2).